A 756-amino-acid polypeptide reads, in one-letter code: Conserved oligomeric Golgi complex subunit 2 (756 aa).

Residues 62–82 (RSELRSHLASLNRELVDLINR) are a coiled coil. Residues 173-199 (WQNEDANSMGRSSMNDENSTQQDGTTM) are disordered.

The protein belongs to the COG2 family. As to quaternary structure, homodimer. Component of the conserved oligomeric Golgi complex which is composed of eight different subunits and is required for normal Golgi morphology and localization. Binds to COG3 and COG4. Interacts with FPP3/VETH1 and FPP2/VETH2; this interaction promotes the association between cortical microtubules and EXO70A1. Binds to SEC15B, and, possibly, with EXO70A1, SEC3A and SEC10A.

Its subcellular location is the golgi apparatus membrane. Functionally, required for normal Golgi morphology and function. Ensures, when in complex with FPP3/VETH1 and FPP2/VETH2, the correct secondary cell wall (SCW) deposition pattern by recruiting exocyst components to cortical microtubules in xylem cells during secondary cell wall deposition. The sequence is that of Conserved oligomeric Golgi complex subunit 2 from Arabidopsis thaliana (Mouse-ear cress).